We begin with the raw amino-acid sequence, 35 residues long: MSDINATRLPIWGIGCDPCVGDDVTALLTRGEALC.

The propeptide occupies 1 to 10 (MSDINATRLP). A cross-link (cyclopeptide (Ile-Pro)) is located at residues 11–18 (IWGIGCDP). The segment at residues 12 to 16 (WGIGC) is a cross-link (2'-cysteinyl-6'-hydroxytryptophan sulfoxide (Trp-Cys)). The propeptide occupies 19–35 (CVGDDVTALLTRGEALC).

The protein belongs to the MSDIN fungal toxin family. Post-translationally, processed by the macrocyclase-peptidase enzyme POPB to yield a toxic cyclic octapeptide. POPB first removes 10 residues from the N-terminus. Conformational trapping of the remaining peptide forces the enzyme to release this intermediate rather than proceed to macrocyclization. The enzyme rebinds the remaining peptide in a different conformation and catalyzes macrocyclization of the N-terminal 8 residues. In terms of tissue distribution, expressed in basidiocarps.

Toxin belonging to the bicyclic octapeptides amatoxins that acts by binding non-competitively to RNA polymerase II and greatly slowing the elongation of transcripts from target promoters. The sequence is that of Beta-amanitin proprotein from Amanita exitialis (Guangzhou destroying angel).